The chain runs to 419 residues: tRNA modification GTPase MnmE (419 aa).

Residues arginine 20, glutamate 76, and arginine 115 each contribute to the (6S)-5-formyl-5,6,7,8-tetrahydrofolate site. The TrmE-type G domain maps to 211 to 348 (GYEVAIIGPP…LLDLVYDRLR (138 aa)). A K(+)-binding site is contributed by asparagine 221. GTP-binding positions include 221-226 (NAGKST), 240-246 (SEIAGTT), and 265-268 (DTAG). Serine 225 contacts Mg(2+). Residues serine 240, isoleucine 242, and threonine 245 each coordinate K(+). Position 246 (threonine 246) interacts with Mg(2+). Residue lysine 419 participates in (6S)-5-formyl-5,6,7,8-tetrahydrofolate binding.

It belongs to the TRAFAC class TrmE-Era-EngA-EngB-Septin-like GTPase superfamily. TrmE GTPase family. Homodimer. Heterotetramer of two MnmE and two MnmG subunits. It depends on K(+) as a cofactor.

Its subcellular location is the cytoplasm. Exhibits a very high intrinsic GTPase hydrolysis rate. Involved in the addition of a carboxymethylaminomethyl (cmnm) group at the wobble position (U34) of certain tRNAs, forming tRNA-cmnm(5)s(2)U34. The sequence is that of tRNA modification GTPase MnmE from Paracoccus denitrificans (strain Pd 1222).